We begin with the raw amino-acid sequence, 1232 residues long: Chromosome-associated kinesin KIF4A (1232 aa).

Positions P9–I336 constitute a Kinesin motor domain. ATP is bound at residue G88–T95. The stretch at E350 to V999 forms a coiled coil. S394 carries the phosphoserine modification. The tract at residues A496–H515 is disordered. Positions Q497–H515 are enriched in polar residues. Residues Q663–H1232 form a required for the interaction with PRC1 region. The Nuclear localization signal motif lies at P793–R798. Phosphothreonine is present on T799. Residues S801, S810, S815, and S951 each carry the phosphoserine modification. T995 carries the post-translational modification Phosphothreonine. The segment at A1000–H1232 is globular. A phosphoserine mark is found at S1001, S1013, S1017, S1028, and S1126. Residues C1086–D1144 are CRD; required for [4Fe-4S] cluster binding and localization to the spindle midzone and midbody during anaphase and telophase. The segment at Q1122–L1142 is disordered. Residues R1132–L1142 are compositionally biased toward basic and acidic residues. The residue at position 1181 (T1181) is a Phosphothreonine. A Phosphoserine modification is found at S1186. Residue K1194 forms a Glycyl lysine isopeptide (Lys-Gly) (interchain with G-Cter in SUMO2) linkage. S1225 carries the phosphoserine modification.

Belongs to the TRAFAC class myosin-kinesin ATPase superfamily. Kinesin family. Chromokinesin subfamily. As to quaternary structure, interacts with the cytosolic iron-sulfur protein assembly (CIA) complex components CIAO2B and MMS19; the interactions facilitate the transfer of Fe-S clusters to KIF4A to ensure proper localization of KIF4A to mitotic machinery components. Interacts (via C-terminus) with unphosphorylated PRC1 (via N-terminus); the interaction is required for the progression of mitosis. [2Fe-2S] cluster is required as a cofactor. [4Fe-4S] cluster serves as cofactor. As to expression, highly expressed in hematopoietic tissues, fetal liver, spleen, thymus and adult thymus and bone marrow. Lower levels are found in heart, testis, kidney, colon and lung.

The protein resides in the nucleus matrix. The protein localises to the cytoplasm. It localises to the cytoskeleton. Its subcellular location is the spindle. It is found in the midbody. The protein resides in the chromosome. Functionally, iron-sulfur (Fe-S) cluster binding motor protein that has a role in chromosome segregation during mitosis. Translocates PRC1 to the plus ends of interdigitating spindle microtubules during the metaphase to anaphase transition, an essential step for the formation of an organized central spindle midzone and midbody and for successful cytokinesis. May play a role in mitotic chromosomal positioning and bipolar spindle stabilization. The polypeptide is Chromosome-associated kinesin KIF4A (KIF4A) (Homo sapiens (Human)).